Here is a 362-residue protein sequence, read N- to C-terminus: Cobalt-precorrin-5B C(1)-methyltransferase (362 aa).

The protein belongs to the CbiD family.

It catalyses the reaction Co-precorrin-5B + S-adenosyl-L-methionine = Co-precorrin-6A + S-adenosyl-L-homocysteine. Its pathway is cofactor biosynthesis; adenosylcobalamin biosynthesis; cob(II)yrinate a,c-diamide from sirohydrochlorin (anaerobic route): step 6/10. In terms of biological role, catalyzes the methylation of C-1 in cobalt-precorrin-5B to form cobalt-precorrin-6A. In Burkholderia cenocepacia (strain HI2424), this protein is Cobalt-precorrin-5B C(1)-methyltransferase.